We begin with the raw amino-acid sequence, 420 residues long: FLYWCH transcription factor 3 (420 aa).

Residues 87 to 104 (SSTSPDSQPSSSSSVMSS) are compositionally biased toward low complexity. Disordered regions lie at residues 87–107 (SSTSPDSQPSSSSSVMSSTDE) and 119–138 (KINKAQRQSSPNSSKPYTPR). The span at 123–134 (AQRQSSPNSSKP) shows a compositional bias: polar residues. The FLYWCH-type zinc finger occupies 140–195 (IRERVLFDEHLYVFDKCSYDSKKRFFRCERKNTCPARIHTPFDAERVIHKVQVHNH).

In terms of biological role, probable transcription factor. May bind to the promoters of target genes, including micro-RNA genes, in order to repress expression, and acting redundantly with flh-2. This Caenorhabditis elegans protein is FLYWCH transcription factor 3.